The primary structure comprises 163 residues: Probable calcium-binding protein CML26 (163 aa).

Ala-2 bears the N-acetylalanine mark. 4 consecutive EF-hand domains span residues 16–51 (STDM…MGTS), 52–82 (YTEE…TICR), 85–120 (SSAV…LGMT), and 121–156 (CSVE…PELV). Residues Asp-29, Asn-31, Asp-33, Lys-35, Glu-40, Asp-65, Asp-67, Asp-69, Glu-76, Asp-98, Asn-100, Asn-102, Glu-109, Asp-134, Asp-136, Asp-138, Asn-140, and Glu-145 each coordinate Ca(2+).

In terms of biological role, potential calcium sensor. In Arabidopsis thaliana (Mouse-ear cress), this protein is Probable calcium-binding protein CML26 (CML26).